Consider the following 352-residue polypeptide: MEFQKFRTMHFPRDVYIGHDVLEHIVDVVGENSRNKNAIIVSGDLTYELAGRKVHDLLSTYGYEVHVFLAGNANYDTLERIEYESLDIQAGIVIGVGGGAKIDLAKKLAFDRKLPFVSVPTAPSHDGIASPRASLRRNGISYSEEGAMPIGVIADTAIMIKAPYRYLAAGAADVISNLSAVKDWKLAHRLKGEEFSSSAAAMSEYSAQEVLSQINEIKKYEESSVWLVTKNILASGTAMAIAGNSRPGSGSEHLFAHALEAAGVENMLHGEMCAMGTVISMYLHDENWQQIKEAFDNLGISIRSRDYGIEDEIVINALRTAHAIRPERYTILGESDMSYDAAVKALELTGII.

NAD(+) contacts are provided by residues 99-103 (GAKID) and 121-124 (TAPS). D126 serves as a coordination point for substrate. Residue S130 coordinates NAD(+). Residue D173 coordinates substrate. Zn(2+) is bound by residues D173 and H253. H257 is a binding site for substrate. Position 269 (H269) interacts with Zn(2+).

This sequence belongs to the glycerol-1-phosphate dehydrogenase family. Zn(2+) is required as a cofactor.

Its subcellular location is the cytoplasm. The catalysed reaction is sn-glycerol 1-phosphate + NAD(+) = dihydroxyacetone phosphate + NADH + H(+). It catalyses the reaction sn-glycerol 1-phosphate + NADP(+) = dihydroxyacetone phosphate + NADPH + H(+). Its pathway is membrane lipid metabolism; glycerophospholipid metabolism. Its function is as follows. Catalyzes the NAD(P)H-dependent reduction of dihydroxyacetonephosphate (DHAP or glycerone phosphate) to glycerol 1-phosphate (G1P). The G1P thus generated is used as the glycerophosphate backbone of phospholipids in the cellular membranes of Archaea. The polypeptide is Glycerol-1-phosphate dehydrogenase [NAD(P)+] (Thermoplasma acidophilum (strain ATCC 25905 / DSM 1728 / JCM 9062 / NBRC 15155 / AMRC-C165)).